Reading from the N-terminus, the 162-residue chain is Transcription antitermination protein RfaH (162 aa).

This sequence belongs to the RfaH family. In terms of assembly, interacts with both the nontemplate DNA and the RNA polymerase (RNAP). Monomer in solution.

Functionally, enhances distal genes transcription elongation in a specialized subset of operons that encode extracytoplasmic components. RfaH is recruited into a multi-component RNA polymerase complex by the ops element, which is a short conserved DNA sequence located downstream of the main promoter of these operons. Once bound, RfaH suppresses pausing and inhibits Rho-dependent and intrinsic termination at a subset of sites. Termination signals are bypassed, which allows complete synthesis of long RNA chains. Enhances expression of several operons involved in synthesis of lipopolysaccharides, exopolysaccharides, hemolysin, and sex factor. Also negatively controls expression and surface presentation of AG43 and possibly another AG43-independent factor that mediates cell-cell interactions and biofilm formation. The sequence is that of Transcription antitermination protein RfaH from Escherichia coli (strain K12).